A 329-amino-acid polypeptide reads, in one-letter code: uncharacterized protein (329 aa).

Transmembrane regions (helical) follow at residues 5–24, 34–56, 92–114, 124–146, 159–181, 196–218, 231–253, 263–285, and 306–328; these read NLLL…FLTV, IAVA…YLIF, FGYI…LEWG, IIFF…VLFY, SANF…LLSL, TAHR…LQYL, FSIV…LGAY, LIGV…RLFG, and FWLF…RILT.

Its subcellular location is the cell membrane. This is an uncharacterized protein from Archaeoglobus fulgidus (strain ATCC 49558 / DSM 4304 / JCM 9628 / NBRC 100126 / VC-16).